The sequence spans 944 residues: UvrABC system protein A (944 aa).

31-38 (GLSGSGKS) is an ATP binding site. The C4-type zinc-finger motif lies at 253-280 (CPVCGHAISELEPKLFSFNNPAGACPTC). ABC transporter domains follow at residues 309-586 (WDRR…PDSL) and 606-936 (RNKK…HYLK). An ATP-binding site is contributed by 639 to 646 (GVSGSGKS). Residues 739 to 765 (CEACQGDGLIKVEMHFLPDIYVPCDVC) form a C4-type zinc finger.

This sequence belongs to the ABC transporter superfamily. UvrA family. Forms a heterotetramer with UvrB during the search for lesions.

It localises to the cytoplasm. In terms of biological role, the UvrABC repair system catalyzes the recognition and processing of DNA lesions. UvrA is an ATPase and a DNA-binding protein. A damage recognition complex composed of 2 UvrA and 2 UvrB subunits scans DNA for abnormalities. When the presence of a lesion has been verified by UvrB, the UvrA molecules dissociate. This is UvrABC system protein A from Pseudomonas putida (strain ATCC 47054 / DSM 6125 / CFBP 8728 / NCIMB 11950 / KT2440).